The sequence spans 3411 residues: Genome polyprotein (3411 aa).

Topologically, residues 1–104 (MSGRKAQGKT…LSSRKRRSHD (104 aa)) are cytoplasmic. Residues 102 to 121 (SHDALAVQFLILGMLLMAGG) constitute a propeptide, ER anchor for the capsid protein C, removed in mature form by serine protease NS3. A helical membrane pass occupies residues 105-125 (ALAVQFLILGMLLMAGGVTLV). At 126-244 (RKNRWLLLNV…GERQLQKIER (119 aa)) the chain is on the extracellular side. N-linked (GlcNAc...) asparagine; by host glycosylation is found at Asn-134 and Asn-150. Residues 245–265 (WLVRNPFFAVTALTIAYLVGS) form a helical membrane-spanning segment. The Cytoplasmic portion of the chain corresponds to 266 to 270 (NMTQR). A helical transmembrane segment spans residues 271–285 (VVIALLVLAVGPAYS). Over 286 to 730 (AHCIGITDRD…TVFGSAFQGL (445 aa)) the chain is Extracellular. 8 disulfide bridges follow: Cys-288–Cys-315, Cys-345–Cys-401, Cys-345–Cys-406, Cys-359–Cys-390, Cys-377–Cys-401, Cys-377–Cys-406, Cys-467–Cys-568, and Cys-585–Cys-615. The tract at residues 383–396 (DRGWGNGCGLFGKG) is fusion peptide. A helical transmembrane segment spans residues 731 to 751 (FGGLSWITKVIMGAVLIWVGI). At 752–757 (NTRNMT) the chain is on the extracellular side. Residues 758–778 (MSMSMILVGVIMMFLSLGVGA) traverse the membrane as a helical segment. At 779-1132 (DQGCAINFGK…LVRSWVTAGE (354 aa)) the chain is on the extracellular side. 6 disulfides stabilise this stretch: Cys-782–Cys-793, Cys-833–Cys-921, Cys-957–Cys-1002, Cys-1058–Cys-1107, Cys-1069–Cys-1091, and Cys-1090–Cys-1094. Residues Asn-908 and Asn-986 are each glycosylated (N-linked (GlcNAc...) asparagine; by host). Residues 1133–1153 (IHAVPFGLVSMMIAMEVVLRK) traverse the membrane as a helical segment. Over 1154–1201 (RQGPKQMLVGGVVLLGAMLVGQVTLLDLLKLTVAVGLHFHEMNNGGDA) the chain is Cytoplasmic. The helical transmembrane segment at 1202–1222 (MYMALIAAFSIRPGLLIGFGL) threads the bilayer. The Lumenal segment spans residues 1223-1287 (RTLWSPRERL…ILPLMALLTP (65 aa)). A helical membrane pass occupies residues 1288-1308 (VTMAEVRLAAMLFCTVVIIGV). Topologically, residues 1309 to 1355 (LHQNSKDTSMQKTIPLVALTLTSYLGLTQPFLGLCAFLATRLFGRRS) are cytoplasmic. Residues 1356 to 1376 (IPVNEALAAAGLVGVLAGLAF) traverse the membrane as a helical segment. At 1377-1378 (QE) the chain is on the lumenal side. Residues 1379–1399 (MENFLGPIAVGGILMMLVSVA) form a helical membrane-spanning segment. Over 1400–1456 (GRVDGLELRKLGEVSWEEEAEISGSSARYDVALSEQGEFKLLSEEKVPWDQVVMTSL) the chain is Cytoplasmic. An interacts with and activates NS3 protease region spans residues 1407 to 1446 (LRKLGEVSWEEEAEISGSSARYDVALSEQGEFKLLSEEKV). The helical intramembrane region spans 1457–1477 (ALVGAAIHPFALLLVLAGWLF). Over 1478–2157 (HVKGARRSGD…RNALSMMPEA (680 aa)) the chain is Cytoplasmic. The Peptidase S7 domain maps to 1485-1665 (SGDVLWDIPT…EVKEEGKEEL (181 aa)). Residues His-1537, Asp-1561, and Ser-1622 each act as charge relay system; for serine protease NS3 activity in the active site. The Helicase ATP-binding domain occupies 1669–1825 (PTMLKKGMTT…HSNGEIEDVQ (157 aa)). The interval 1673-1676 (KKGM) is important for RNA-binding. 1682–1689 (FHPGAGKT) lines the ATP pocket. The DEAH box motif lies at 1773–1776 (DEAH). A Helicase C-terminal domain is found at 1820-1997 (EIEDVQTDIP…VRGGMVAPLY (178 aa)). Position 1877 is an N6-acetyllysine; by host (Lys-1877). Positions 1942 to 1961 (AAQRRGRIGRNPNRDGDSYY) are disordered. A helical transmembrane segment spans residues 2158 to 2178 (MTIAMLFILAGLLTSGMVIFF). Topologically, residues 2179 to 2186 (MSPKGISR) are lumenal. Positions 2187-2207 (MSMAMGTMAGCGYLMFLGGVK) form an intramembrane region, helical. At 2208-2209 (PT) the chain is on the lumenal side. Residues 2210–2230 (HISYIMLIFFVLMVVVIPEPG) form a helical membrane-spanning segment. Over 2231–2241 (QQRSIQDNQVA) the chain is Cytoplasmic. Residues 2242–2262 (YLIIGILTLVSVVAANELGML) form a helical membrane-spanning segment. The Lumenal segment spans residues 2263–2293 (EKTKEDLFGKKDLIPSSASPWSWPDLDLKPG). Positions 2294–2314 (AAWTVYVGIVTMLSPMLHHWI) form an intramembrane region, helical. Residues 2315-2360 (KVEYGNLSLSGIAQSASVLSFMDKGIPFMKMNISVIILLVSGWNSI) are Lumenal-facing. Residues 2361 to 2380 (TVMPLLCGIGCAMLHWSLIL) form a helical membrane-spanning segment. Residues 2381–2421 (PGIKAQQSKLAQRRVFHGVAKNPVVDGNPTVDIEEAPEMPA) lie on the Cytoplasmic side of the membrane. The chain crosses the membrane as a helical span at residues 2422–2442 (LYEKKLALYLLLALSLASVAM). Over 2443–2445 (CRT) the chain is Lumenal. A helical membrane pass occupies residues 2446–2466 (PFSLAEGIVLASAALGPLIEG). At 2467-3411 (NTSLLWNGPM…DADLQPGELI (945 aa)) the chain is on the cytoplasmic side. The mRNA cap 0-1 NS5-type MT domain occupies 2507–2771 (GRANGKTLGE…DVILPIGTRS (265 aa)). Ser-2562 is an S-adenosyl-L-methionine binding site. The residue at position 2562 (Ser-2562) is a Phosphoserine. Lys-2567 (for 2'-O-MTase activity) is an active-site residue. 6 residues coordinate S-adenosyl-L-methionine: Gly-2592, Trp-2593, Thr-2610, Leu-2611, Asp-2637, and Ile-2638. Asp-2652 functions as the For 2'-O-MTase activity in the catalytic mechanism. Ile-2653 is an S-adenosyl-L-methionine binding site. Active-site for 2'-O-MTase activity residues include Lys-2688 and Glu-2724. Tyr-2726 is a binding site for S-adenosyl-L-methionine. The short motif at 2878 to 2911 (RKIMKVVNRWLFRHLAREKNPRLCTKEEFIAKVR) is the Nuclear localization signal element. Zn(2+)-binding residues include Glu-2945, His-2949, Cys-2954, and Cys-2957. Positions 3035 to 3187 (GGFYADDTAG…RPIDDRFGLA (153 aa)) constitute a RdRp catalytic domain. His-3222, Cys-3238, and Cys-3357 together coordinate Zn(2+).

The protein in the N-terminal section; belongs to the class I-like SAM-binding methyltransferase superfamily. mRNA cap 0-1 NS5-type methyltransferase family. In terms of assembly, homodimer. Interacts (via N-terminus) with host EXOC1 (via C-terminus); this interaction results in EXOC1 degradation through the proteasome degradation pathway. Forms heterodimers with envelope protein E in the endoplasmic reticulum and Golgi. As to quaternary structure, homodimer; in the endoplasmic reticulum and Golgi. Interacts with protein prM. Interacts with non-structural protein 1. In terms of assembly, homodimer; Homohexamer when secreted. Interacts with envelope protein E. Interacts (via N-terminus) with serine protease NS3. As to quaternary structure, forms a heterodimer with serine protease NS3. May form homooligomers. In terms of assembly, forms a heterodimer with NS2B. Interacts with non-structural protein 2A (via N-terminus). Interacts with NS4B. Interacts with unphosphorylated RNA-directed RNA polymerase NS5; this interaction stimulates RNA-directed RNA polymerase NS5 guanylyltransferase activity. NS3 interacts with host PDCD6IP; this interaction contributes to virion release. Interacts with serine protease NS3. As to quaternary structure, homodimer. Interacts with host STAT2; this interaction prevents the establishment of cellular antiviral state. Interacts with serine protease NS3. Interacts with host TRIM23; this interaction leads to NS5 ubiquitination. In terms of processing, specific enzymatic cleavages in vivo yield mature proteins. The nascent capsid protein C contains a C-terminal hydrophobic domain that act as a signal sequence for translocation of prM into the lumen of the ER. Mature capsid protein C is cleaved at a site upstream of this hydrophobic domain by NS3. prM is cleaved in post-Golgi vesicles by a host furin, releasing the mature small envelope protein M, and peptide pr. Non-structural protein 2A-alpha, a C-terminally truncated form of non-structural protein 2A, results from partial cleavage by NS3. Specific enzymatic cleavages in vivo yield mature proteins peptide 2K acts as a signal sequence and is removed from the N-terminus of NS4B by the host signal peptidase in the ER lumen. Signal cleavage at the 2K-4B site requires a prior NS3 protease-mediated cleavage at the 4A-2K site. Post-translationally, cleaved in post-Golgi vesicles by a host furin, releasing the mature small envelope protein M, and peptide pr. This cleavage is incomplete as up to 30% of viral particles still carry uncleaved prM. N-glycosylated. In terms of processing, N-glycosylated. The excreted form is glycosylated and this is required for efficient secretion of the protein from infected cells. Post-translationally, polyubiquitinated; ubiquitination is probably mediated by host TRIM23 and is prerequisite for NS5-STAT2 interaction. NS5 is not ISGylated or sumoylated. Acetylated by host KAT5. Acetylation modulates NS3 RNA-binding and unwinding activities and plays an important positive role for viral replication. In terms of processing, phosphorylated on serines residues. This phosphorylation may trigger NS5 nuclear localization.

It localises to the virion. The protein resides in the host nucleus. The protein localises to the host cytoplasm. It is found in the host perinuclear region. Its subcellular location is the secreted. It localises to the virion membrane. The protein resides in the host endoplasmic reticulum membrane. It carries out the reaction Selective hydrolysis of -Xaa-Xaa-|-Yaa- bonds in which each of the Xaa can be either Arg or Lys and Yaa can be either Ser or Ala.. The enzyme catalyses RNA(n) + a ribonucleoside 5'-triphosphate = RNA(n+1) + diphosphate. It catalyses the reaction a ribonucleoside 5'-triphosphate + H2O = a ribonucleoside 5'-diphosphate + phosphate + H(+). The catalysed reaction is ATP + H2O = ADP + phosphate + H(+). It carries out the reaction a 5'-end (5'-triphosphoguanosine)-ribonucleoside in mRNA + S-adenosyl-L-methionine = a 5'-end (N(7)-methyl 5'-triphosphoguanosine)-ribonucleoside in mRNA + S-adenosyl-L-homocysteine. The enzyme catalyses a 5'-end (N(7)-methyl 5'-triphosphoguanosine)-ribonucleoside in mRNA + S-adenosyl-L-methionine = a 5'-end (N(7)-methyl 5'-triphosphoguanosine)-(2'-O-methyl-ribonucleoside) in mRNA + S-adenosyl-L-homocysteine + H(+). In terms of biological role, plays a role in virus budding by binding to the cell membrane and gathering the viral RNA into a nucleocapsid that forms the core of a mature virus particle. During virus entry, may induce genome penetration into the host cytoplasm after hemifusion induced by the surface proteins. Can migrate to the cell nucleus where it modulates host functions. Functionally, inhibits RNA silencing by interfering with host Dicer. Its function is as follows. Prevents premature fusion activity of envelope proteins in trans-Golgi by binding to envelope protein E at pH6.0. After virion release in extracellular space, gets dissociated from E dimers. Acts as a chaperone for envelope protein E during intracellular virion assembly by masking and inactivating envelope protein E fusion peptide. prM is the only viral peptide matured by host furin in the trans-Golgi network probably to avoid catastrophic activation of the viral fusion activity in acidic Golgi compartment prior to virion release. prM-E cleavage is inefficient, and many virions are only partially matured. These uncleaved prM would play a role in immune evasion. In terms of biological role, may play a role in virus budding. Exerts cytotoxic effects by activating a mitochondrial apoptotic pathway through M ectodomain. May display a viroporin activity. Functionally, binds to host cell surface receptor and mediates fusion between viral and cellular membranes. Envelope protein is synthesized in the endoplasmic reticulum in the form of heterodimer with protein prM. They play a role in virion budding in the ER, and the newly formed immature particle is covered with 60 spikes composed of heterodimer between precursor prM and envelope protein E. The virion is transported to the Golgi apparatus where the low pH causes dissociation of PrM-E heterodimers and formation of E homodimers. prM-E cleavage is inefficient, and many virions are only partially matured. These uncleaved prM would play a role in immune evasion. Its function is as follows. Involved in immune evasion, pathogenesis and viral replication. Once cleaved off the polyprotein, is targeted to three destinations: the viral replication cycle, the plasma membrane and the extracellular compartment. Essential for viral replication. Required for formation of the replication complex and recruitment of other non-structural proteins to the ER-derived membrane structures. Excreted as a hexameric lipoparticle that plays a role against host immune response. Antagonizing the complement function. Binds to the host macrophages and dendritic cells. Inhibits signal transduction originating from Toll-like receptor 3 (TLR3). Component of the viral RNA replication complex that functions in virion assembly and antagonizes the host immune response. In terms of biological role, required cofactor for the serine protease function of NS3. May have membrane-destabilizing activity and form viroporins. Functionally, displays three enzymatic activities: serine protease, NTPase and RNA helicase. NS3 serine protease, in association with NS2B, performs its autocleavage and cleaves the polyprotein at dibasic sites in the cytoplasm: C-prM, NS2A-NS2B, NS2B-NS3, NS3-NS4A, NS4A-2K and NS4B-NS5. NS3 RNA helicase binds RNA and unwinds dsRNA in the 3' to 5' direction. Also plays a role in virus assembly. Its function is as follows. Regulates the ATPase activity of the NS3 helicase activity. NS4A allows NS3 helicase to conserve energy during unwinding. Functions as a signal peptide for NS4B and is required for the interferon antagonism activity of the latter. In terms of biological role, induces the formation of ER-derived membrane vesicles where the viral replication takes place. Inhibits interferon (IFN)-induced host STAT1 phosphorylation and nuclear translocation, thereby preventing the establishment of cellular antiviral state by blocking the IFN-alpha/beta pathway. Functionally, replicates the viral (+) and (-) RNA genome, and performs the capping of genomes in the cytoplasm. NS5 methylates viral RNA cap at guanine N-7 and ribose 2'-O positions. Besides its role in RNA genome replication, also prevents the establishment of cellular antiviral state by blocking the interferon-alpha/beta (IFN-alpha/beta) signaling pathway. IFN-I induces binding of NS5 to host IFN-activated transcription factor STAT2, preventing its transcriptional activity. Host TRIM23 is the E3 ligase that interacts with and polyubiquitinates NS5 to promote its binding to STAT2 and trigger IFN-I signaling inhibition. The polypeptide is Genome polyprotein (Yellow fever virus (isolate Ivory Coast/1999) (YFV)).